A 178-amino-acid chain; its full sequence is Colicin-A immunity protein (178 aa).

The Cytoplasmic segment spans residues 1 to 13 (MMNEHSIDTDNRK). A helical transmembrane segment spans residues 14-37 (ANNALYLFIIIGLIPLLCIFVVYY). The Periplasmic portion of the chain corresponds to 38 to 68 (KTPDALLLRKIATSTENLPSITSSYNPLMTK). The helical transmembrane segment at 69-89 (VMDIYCKTAPFLALILYILTF) threads the bilayer. The Cytoplasmic portion of the chain corresponds to 90-105 (KIRKLINNTDRNTVLR). A helical transmembrane segment spans residues 106 to 123 (SCLLSPLVYAAIVYLFCF). Residues 124 to 142 (RNFELTTAGRPVRLMATND) lie on the Periplasmic side of the membrane. The chain crosses the membrane as a helical span at residues 143–165 (ATLLLFYIGLYSIIFFTTYITLF). Topologically, residues 166 to 178 (TPVTAFKLLKKRQ) are cytoplasmic.

It is found in the cell inner membrane. This protein is able to protect a cell, which harbors the plasmid ColA encoding colicin A, against colicin A. In Citrobacter freundii, this protein is Colicin-A immunity protein (cai).